The primary structure comprises 156 residues: Small ribosomal subunit protein uS7 (156 aa).

It belongs to the universal ribosomal protein uS7 family. In terms of assembly, part of the 30S ribosomal subunit. Contacts proteins S9 and S11.

Its function is as follows. One of the primary rRNA binding proteins, it binds directly to 16S rRNA where it nucleates assembly of the head domain of the 30S subunit. Is located at the subunit interface close to the decoding center, probably blocks exit of the E-site tRNA. The sequence is that of Small ribosomal subunit protein uS7 from Arthrobacter sp. (strain FB24).